The chain runs to 230 residues: Cytidylate kinase (230 aa).

12 to 20 is a binding site for ATP; sequence GPSGAGKGT.

This sequence belongs to the cytidylate kinase family. Type 1 subfamily.

The protein resides in the cytoplasm. It carries out the reaction CMP + ATP = CDP + ADP. The enzyme catalyses dCMP + ATP = dCDP + ADP. This is Cytidylate kinase from Shewanella putrefaciens (strain CN-32 / ATCC BAA-453).